A 548-amino-acid polypeptide reads, in one-letter code: Chaperonin GroEL (548 aa).

ATP-binding positions include 30-33 (TLGP), K51, 87-91 (DGTTT), G415, 479-481 (NAA), and D495.

This sequence belongs to the chaperonin (HSP60) family. As to quaternary structure, forms a cylinder of 14 subunits composed of two heptameric rings stacked back-to-back. Interacts with the co-chaperonin GroES.

It localises to the cytoplasm. It carries out the reaction ATP + H2O + a folded polypeptide = ADP + phosphate + an unfolded polypeptide.. In terms of biological role, together with its co-chaperonin GroES, plays an essential role in assisting protein folding. The GroEL-GroES system forms a nano-cage that allows encapsulation of the non-native substrate proteins and provides a physical environment optimized to promote and accelerate protein folding. The chain is Chaperonin GroEL from Methylibium petroleiphilum (strain ATCC BAA-1232 / LMG 22953 / PM1).